A 987-amino-acid chain; its full sequence is Centrosomal protein of 120 kDa (987 aa).

The region spanning Met-1–Tyr-112 is the C2 1 domain. Residues Lys-352–Leu-408 form a disordered region. One can recognise a C2 2 domain in the interval Ser-438 to Gly-567. A coiled-coil region spans residues Glu-670–Tyr-919. Residues Arg-912 to Ala-926 show a composition bias toward basic and acidic residues. A disordered region spans residues Arg-912 to Ala-937. Position 936 is a phosphoserine (Ser-936).

The protein belongs to the CEP120 family. As to quaternary structure, interacts with TACC2 and TACC3. Interacts with CCDC52.

The protein localises to the cytoplasm. It localises to the cytoskeleton. It is found in the microtubule organizing center. Its subcellular location is the centrosome. Functionally, plays a role in the microtubule-dependent coupling of the nucleus and the centrosome. Involved in the processes that regulate centrosome-mediated interkinetic nuclear migration (INM) of neural progenitors and for proper positioning of neurons during brain development. Also implicated in the migration and selfrenewal of neural progenitors. May play a role in centriole duplication during mitosis. Required for the recruitment of CEP295 to the proximal end of new-born centrioles at the centriolar microtubule wall during early S phase in a PLK4-dependent manner. The protein is Centrosomal protein of 120 kDa (CEP120) of Bos taurus (Bovine).